The sequence spans 525 residues: Nucleolar and spindle-associated protein 1-C (525 aa).

Disordered regions lie at residues 43-203, 250-293, 373-398, and 452-525; these read FYPE…KKLH, TPVS…FSAA, TPESEPKQMLPSVKKNEPMTTPEKAK, and LSRP…VPVQ. A compositionally biased stretch (polar residues) spans 58–69; sequence SSLTDTDELNSS. Residues 82-92 show a composition bias toward basic residues; sequence THRRGRGRKPL. The segment covering 93–102 has biased composition (basic and acidic residues); the sequence is KNHDTPKDEF. The segment covering 113-127 has biased composition (polar residues); sequence SLASETDNTQHQNCL. A compositionally biased stretch (basic and acidic residues) spans 160 to 169; it reads TTEKRQKKAS. Over residues 270–285 the composition is skewed to polar residues; sequence PPTTGASPSRTPTNQR. Positions 476–494 are enriched in polar residues; that stretch reads CGSNNNVSVLKNNFKQPHL. Residues 495–514 are compositionally biased toward basic and acidic residues; sequence QTREDRRKQHEQDRKGKRDQ.

The protein belongs to the NUSAP family. In terms of assembly, interacts with DNA, microtubules, ipo7, kpna2 and kpnb1. Microtubule stabilization is inhibited by ipo7 and kpna2, while microtubule bundling is inhibited by kpnb1. Active GTP-bound ran causes dissociation of ipo7 and kpnb1.

It is found in the cytoplasm. The protein localises to the nucleus. The protein resides in the cytoskeleton. It localises to the spindle. In terms of biological role, microtubule-associated protein with the capacity to bundle and stabilize microtubules. May associate with chromosomes and promote the organization of meiotic or mitotic spindle microtubules around them. The sequence is that of Nucleolar and spindle-associated protein 1-C (nusap1-c) from Xenopus laevis (African clawed frog).